We begin with the raw amino-acid sequence, 172 residues long: Large ribosomal subunit protein uL10 (172 aa).

Belongs to the universal ribosomal protein uL10 family. As to quaternary structure, part of the ribosomal stalk of the 50S ribosomal subunit. The N-terminus interacts with L11 and the large rRNA to form the base of the stalk. The C-terminus forms an elongated spine to which L12 dimers bind in a sequential fashion forming a multimeric L10(L12)X complex.

In terms of biological role, forms part of the ribosomal stalk, playing a central role in the interaction of the ribosome with GTP-bound translation factors. This Rhodopseudomonas palustris (strain BisB5) protein is Large ribosomal subunit protein uL10.